The sequence spans 81 residues: Three-finger toxin 3FTx-Oxy6 (81 aa).

The N-terminal stretch at 1–21 (MKTLLLSLVVMTIVYLDLGYT) is a signal peptide. 4 cysteine pairs are disulfide-bonded: C24-C43, C36-C61, C65-C73, and C74-C79.

The protein belongs to the three-finger toxin family. Short-chain subfamily. Expressed by the venom gland.

It localises to the secreted. This Oxyuranus microlepidotus (Inland taipan) protein is Three-finger toxin 3FTx-Oxy6.